The sequence spans 436 residues: 3-ketoacyl-CoA thiolase (436 aa).

The Acyl-thioester intermediate role is filled by Cys-99. Catalysis depends on proton acceptor residues His-392 and Cys-422.

This sequence belongs to the thiolase-like superfamily. Thiolase family. Heterotetramer of two alpha chains (FadJ) and two beta chains (FadI).

The protein resides in the cytoplasm. The enzyme catalyses an acyl-CoA + acetyl-CoA = a 3-oxoacyl-CoA + CoA. It participates in lipid metabolism; fatty acid beta-oxidation. In terms of biological role, catalyzes the final step of fatty acid oxidation in which acetyl-CoA is released and the CoA ester of a fatty acid two carbons shorter is formed. The polypeptide is 3-ketoacyl-CoA thiolase (Escherichia coli O81 (strain ED1a)).